A 313-amino-acid polypeptide reads, in one-letter code: Probable WRKY transcription factor 41 (313 aa).

Positions 135-203 form a DNA-binding region, WRKY; that stretch reads GLEGPHDDIF…YRGTHTCSQG (69 aa).

The protein belongs to the WRKY group III family.

It localises to the nucleus. Functionally, transcription factor. Interacts specifically with the W box (5'-(T)TGAC[CT]-3'), a frequently occurring elicitor-responsive cis-acting element. The chain is Probable WRKY transcription factor 41 (WRKY41) from Arabidopsis thaliana (Mouse-ear cress).